The primary structure comprises 622 residues: MKTLLIHSDYLEFEAKEKTKIAEDADVLSGKMDECLTVFIAVEKDDESDPDAVVKNAVEEIVKTADNLKVKNVVVYPYAHLSSDLGSPATAKEILAEIEKELSGNYEVLRAPFGWYKAFKISCKGHPLSELSRKITTERKEEVKKEKVVSKFYIINGENLELTEVNDEVISKMEDKGLLALLKHELDIKEEGKENGEPPHVKYIKEKEICDYEPSSDAGHFRWYPKGKLIRDLLSDYVYNLVVERGGMPVETPVMYDLQNNAIREHADKFGERQYRFKQGNKDLMLRFAACFGQFMMKKDMYLLPKHMPLKLYELSTYSFRYEQRGELVGLKRLRAFTMPDMHTVCIDMKQAMEAFEDQLWMGLKTGDDFKTPYAIIFRFTEDFFEENKEWFFGMAKEYKQKYGKDAILEILPGRKHYWVGKVDMAVVDSFGRPIENPTVQIDVESAERFGIVVHDGDKKVHPIILHCSPTGSVERVLCGLLENAYLNTLENRPPALPTWLTPVQARVIPVGDKHSAFALDVATKLRASGIRADFDDREDSMGKKVRNAGTDWVNYVVVIGDSEMESGKLTVTVREESELKKAKKEELTVEELIEKITSDVKDAPKRPLPLPMKCSVQPIFR.

The interval M1–E141 is editing domain. The tract at residues P199–P498 is catalytic. Zn(2+)-binding residues include C291, H343, and H467.

It belongs to the class-II aminoacyl-tRNA synthetase family. As to quaternary structure, homodimer. Zn(2+) serves as cofactor.

It localises to the cytoplasm. It catalyses the reaction tRNA(Thr) + L-threonine + ATP = L-threonyl-tRNA(Thr) + AMP + diphosphate + H(+). In terms of biological role, catalyzes the attachment of threonine to tRNA(Thr) in a two-step reaction: L-threonine is first activated by ATP to form Thr-AMP and then transferred to the acceptor end of tRNA(Thr). Also edits incorrectly charged L-seryl-tRNA(Thr). This is Threonine--tRNA ligase from Methanococcus maripaludis (strain C6 / ATCC BAA-1332).